The sequence spans 212 residues: Translation initiation factor IF-3 (212 aa).

The disordered stretch occupies residues 168–212 (MAPKAPASPKKDKADRPEGDAGDTDMAAPAPAPAAAPETESAPSA). A compositionally biased stretch (basic and acidic residues) spans 176-186 (PKKDKADRPEG). Positions 194–212 (AAPAPAPAAAPETESAPSA) are enriched in low complexity.

Belongs to the IF-3 family. Monomer.

It is found in the cytoplasm. IF-3 binds to the 30S ribosomal subunit and shifts the equilibrium between 70S ribosomes and their 50S and 30S subunits in favor of the free subunits, thus enhancing the availability of 30S subunits on which protein synthesis initiation begins. The sequence is that of Translation initiation factor IF-3 from Deinococcus radiodurans (strain ATCC 13939 / DSM 20539 / JCM 16871 / CCUG 27074 / LMG 4051 / NBRC 15346 / NCIMB 9279 / VKM B-1422 / R1).